We begin with the raw amino-acid sequence, 1004 residues long: Putative helicase MOV-10 (1004 aa).

Lys148 bears the N6-acetyllysine mark. Phosphothreonine is present on Thr254. Position 433 is a phosphoserine (Ser433). 525–532 (GPPGTGKT) contacts ATP. Residues 646–649 (DEAG) carry the DEAG box motif. The tract at residues 922-966 (NPLLLGHDPDWKTFLEFCKENGGYTGCPFPAKLDLQQGQDLLQGL) is interaction with AGO2 and APOBEC3G. Residues 966–1004 (LSKLSPSTSGPRRHQNLPQEREGEGGLPLQVEPEWRNEL) are disordered. The residue at position 970 (Ser970) is a Phosphoserine.

It belongs to the DNA2/NAM7 helicase family. SDE3 subfamily. As to quaternary structure, interacts with DICER1, AGO2, TARBP2, EIF6 and RPL7A (60S ribosome subunit); they form a large RNA-induced silencing complex (RISC). Interacts with APOBEC3G in an RNA-dependent manner. Interacts with TRIM71 (via NHL repeats) in an RNA-dependent manner. Interacts with both protein products of LIRE1, ORF1p and ORF2p. Interacts with TUT4 and, to a lesser extent, TUT7; the interactions are RNA-dependent. Interacts with AGO2, TNRC6B and UPF1; the interactions are direct and RNA-dependent. Interacts with FMR1; this interaction is direct, occurs in an RNA-dependent manner on polysomes and induces association of MOV10 with RNAs. Interacts with SHFL; the interaction increases in presence of RNA. Interacts with DHX34; the interaction is RNA-independent. Interacts with RBM46. Post-translationally, ubiquitinated by the DCX(DCAF12) complex that specifically recognizes the glutamate-leucine (Glu-Leu) degron at the C-terminus, leading to its degradation.

It is found in the cytoplasm. The protein resides in the P-body. Its subcellular location is the nucleus. The protein localises to the cytoplasmic ribonucleoprotein granule. It localises to the stress granule. The catalysed reaction is ATP + H2O = ADP + phosphate + H(+). In terms of biological role, 5' to 3' RNA helicase that is involved in a number of cellular roles ranging from mRNA metabolism and translation, modulation of viral infectivity, inhibition of retrotransposition, or regulation of synaptic transmission. Plays an important role in innate antiviral immunity by promoting type I interferon production. Mechanistically, specifically uses IKKepsilon/IKBKE as the mediator kinase for IRF3 activation. Contributes to UPF1 mRNA target degradation by translocation along 3' UTRs. Required for microRNA (miRNA)-mediated gene silencing by the RNA-induced silencing complex (RISC). Required for both miRNA-mediated translational repression and miRNA-mediated cleavage of complementary mRNAs by RISC. In cooperation with FMR1, regulates miRNA-mediated translational repression by AGO2. Restricts retrotransposition of long interspersed element-1 (LINE-1) in cooperation with TUT4 and TUT7 counteracting the RNA chaperonne activity of L1RE1. Facilitates LINE-1 uridylation by TUT4 and TUT7. Required for embryonic viability and for normal central nervous system development and function. Plays two critical roles in early brain development: suppresses retroelements in the nucleus by directly inhibiting cDNA synthesis, while regulates cytoskeletal mRNAs to influence neurite outgrowth in the cytosol. May function as a messenger ribonucleoprotein (mRNP) clearance factor. This chain is Putative helicase MOV-10 (Mov10), found in Mus musculus (Mouse).